The sequence spans 498 residues: Glycerol kinase (498 aa).

Threonine 12 contacts ADP. The ATP site is built by threonine 12, threonine 13, and serine 14. Sn-glycerol 3-phosphate is bound at residue threonine 12. ADP is bound at residue arginine 16. 4 residues coordinate sn-glycerol 3-phosphate: arginine 82, glutamate 83, tyrosine 134, and aspartate 243. Residues arginine 82, glutamate 83, tyrosine 134, aspartate 243, and glutamine 244 each coordinate glycerol. Threonine 265 and glycine 308 together coordinate ADP. ATP is bound by residues threonine 265, glycine 308, glutamine 312, and glycine 411. ADP is bound at residue glycine 411.

The protein belongs to the FGGY kinase family.

The enzyme catalyses glycerol + ATP = sn-glycerol 3-phosphate + ADP + H(+). It participates in polyol metabolism; glycerol degradation via glycerol kinase pathway; sn-glycerol 3-phosphate from glycerol: step 1/1. Its activity is regulated as follows. Inhibited by fructose 1,6-bisphosphate (FBP). In terms of biological role, key enzyme in the regulation of glycerol uptake and metabolism. Catalyzes the phosphorylation of glycerol to yield sn-glycerol 3-phosphate. The sequence is that of Glycerol kinase from Brucella canis (strain ATCC 23365 / NCTC 10854 / RM-666).